Here is a 154-residue protein sequence, read N- to C-terminus: Insulin-like growth factor 1 (154 aa).

The interval 50–78 is b; sequence GPETLCGAELVDALQFVCGDRGFYFNKPT. 3 disulfide bridges follow: Cys-55–Cys-97, Cys-67–Cys-110, and Cys-96–Cys-101. Positions 79–90 are c; sequence GYGSSSRRAPQT. The interval 91 to 111 is a; it reads GIVDECCFRSCDLRRLEMYCA. The interval 112–119 is d; sequence PLKAAKSA. Positions 120 to 154 are cleaved as a propeptide — e peptide; that stretch reads RSVRAQRHTDMPKAQKEVHLKNTSRGSAGNKNYRM. Residues 121–154 form a disordered region; it reads SVRAQRHTDMPKAQKEVHLKNTSRGSAGNKNYRM. Positions 126–139 are enriched in basic and acidic residues; that stretch reads RHTDMPKAQKEVHL. The segment covering 140-154 has biased composition (polar residues); it reads KNTSRGSAGNKNYRM.

The protein belongs to the insulin family. Forms a ternary complex with IGFR1 and ITGAV:ITGB3. Forms a ternary complex with IGFR1 and ITGA6:ITGB4. Forms a ternary complex with IGFBP3 and ALS.

The protein localises to the secreted. Functionally, the insulin-like growth factors, isolated from plasma, are structurally and functionally related to insulin but have a much higher growth-promoting activity. May be a physiological regulator of [1-14C]-2-deoxy-D-glucose (2DG) transport and glycogen synthesis in osteoblasts. Stimulates glucose transport in bone-derived osteoblastic (PyMS) cells and is effective at much lower concentrations than insulin, not only regarding glycogen and DNA synthesis but also with regard to enhancing glucose uptake. May play a role in synapse maturation. Ca(2+)-dependent exocytosis of IGF1 is required for sensory perception of smell in the olfactory bulb. Acts as a ligand for IGF1R. Binds to the alpha subunit of IGF1R, leading to the activation of the intrinsic tyrosine kinase activity which autophosphorylates tyrosine residues in the beta subunit thus initiating a cascade of down-stream signaling events leading to activation of the PI3K-AKT/PKB and the Ras-MAPK pathways. Binds to integrins ITGAV:ITGB3 and ITGA6:ITGB4. Its binding to integrins and subsequent ternary complex formation with integrins and IGFR1 are essential for IGF1 signaling. Induces the phosphorylation and activation of IGFR1, MAPK3/ERK1, MAPK1/ERK2 and AKT1. As part of the MAPK/ERK signaling pathway, acts as a negative regulator of apoptosis in cardiomyocytes via promotion of STUB1/CHIP-mediated ubiquitination and degradation of ICER-type isoforms of CREM. This chain is Insulin-like growth factor 1, found in Ovis aries (Sheep).